The primary structure comprises 632 residues: Chaperone protein HtpG (632 aa).

An a; substrate-binding region spans residues 1 to 339 (MAHETMSFQA…SADLPLNVSR (339 aa)). The interval 340 to 559 (EILQESRDVK…DNDMSGYLQR (220 aa)) is b. Positions 560–632 (MLKAAGQNAP…TNALLLSRAA (73 aa)) are c.

It belongs to the heat shock protein 90 family. As to quaternary structure, homodimer.

Its subcellular location is the cytoplasm. In terms of biological role, molecular chaperone. Has ATPase activity. The polypeptide is Chaperone protein HtpG (Burkholderia lata (strain ATCC 17760 / DSM 23089 / LMG 22485 / NCIMB 9086 / R18194 / 383)).